A 465-amino-acid chain; its full sequence is Pancreatic triacylglycerol lipase (465 aa).

The N-terminal stretch at 1-16 is a signal peptide; sequence MLPLWTLSLLLGAVAG. Disulfide bonds link cysteine 20-cysteine 26 and cysteine 107-cysteine 118. Residue serine 169 is the Nucleophile of the active site. Residue asparagine 183 is glycosylated (N-linked (GlcNAc...) asparagine). The active-site Charge relay system is aspartate 193. Glutamate 204, arginine 207, aspartate 209, and aspartate 212 together coordinate Ca(2+). The cysteines at positions 254 and 278 are disulfide-linked. Catalysis depends on histidine 280, which acts as the Charge relay system. 3 cysteine pairs are disulfide-bonded: cysteine 302–cysteine 313, cysteine 316–cysteine 321, and cysteine 449–cysteine 465. The PLAT domain occupies 355-465; the sequence is WRYKVSVTLS…EEVLLTLTPC (111 aa).

Belongs to the AB hydrolase superfamily. Lipase family. Forms a 1:1 stoichiometric complex with (pro)colipase/CLPS.

It localises to the secreted. The catalysed reaction is a triacylglycerol + H2O = a diacylglycerol + a fatty acid + H(+). It carries out the reaction 1,2,3-tributanoylglycerol + H2O = dibutanoylglycerol + butanoate + H(+). The enzyme catalyses 1,2,3-tri-(9Z-octadecenoyl)-glycerol + H2O = di-(9Z)-octadecenoylglycerol + (9Z)-octadecenoate + H(+). It catalyses the reaction all-trans-retinyl hexadecanoate + H2O = all-trans-retinol + hexadecanoate + H(+). The catalysed reaction is 1,2-di-(9Z-octadecenoyl)-glycerol + H2O = (9Z-octadecenoyl)-glycerol + (9Z)-octadecenoate + H(+). With respect to regulation, inhibited by bile salts, is reactivated by (pro)colipase/CLPS. In terms of biological role, plays an important role in fat metabolism. It preferentially splits the esters of long-chain fatty acids at positions 1 and 3, producing mainly 2-monoacylglycerol and free fatty acids, and shows considerably higher activity against insoluble emulsified substrates than against soluble ones. The protein is Pancreatic triacylglycerol lipase of Homo sapiens (Human).